We begin with the raw amino-acid sequence, 175 residues long: Zinc finger protein ZAT18 (175 aa).

2 C2H2-type zinc fingers span residues 49–71 (FECK…RASH) and 93–115 (HKCT…MRKH). Residues 71–78 (HKKPKLIV) carry the Nuclear localization signal motif. The EAR-like (transcriptional repression) motif lies at 146–152 (LDLNLTP).

Mostly expressed in stems, siliques and leaves, and, to a lower extent, in cotyledons, hypocotyls and roots.

Its subcellular location is the nucleus. In terms of biological role, transcription factor involved in stress responses. Positive regulator of the jasmonic acid (JA)- mediated signaling pathway. Triggers the up-regulation of LOX3, VSP2, PAL1 and PAL2 in a JA-dependent manner. Promotes drought and osmotic stress tolerance by preventing reactive oxygen species (ROS) production (e.g. H(2)O(2)). The protein is Zinc finger protein ZAT18 of Arabidopsis thaliana (Mouse-ear cress).